Here is a 432-residue protein sequence, read N- to C-terminus: Vacuolar protein sorting-associated protein 38 (432 aa).

N-linked (GlcNAc...) asparagine glycosylation is present at Asn-20. Residues 216 to 287 (LDTYQENIKM…KEAIEKLQKK (72 aa)) are a coiled coil. Residues 348–365 (IINAMLGFYSLFIVIYSY) traverse the membrane as a helical segment.

It belongs to the VPS38 family. As to quaternary structure, component of the VPS34 PI3-kinase complex II composed of VPS15, VPS30, VPS34 and VPS38.

It is found in the golgi apparatus. Its subcellular location is the trans-Golgi network membrane. It localises to the endosome membrane. In terms of biological role, involved in endosome-to-Golgi retrograde transport as part of the VPS34 PI3-kinase complex II. This complex is required for the endosome-to-Golgi retrieval of PEP1 and KEX2, and the recruitment of VPS5 and VPS7, two components of the retromer complex, to endosomal membranes (probably through generating a specific pool of phosphatidylinositol 3-phosphate allowing the recruitment of the retromer complex proteins to the endosome). Mediates the interaction between VPS30 and the VPS34-VPS15 core complex, leading to the recruitment of VPS30 to the membrane. This is Vacuolar protein sorting-associated protein 38 from Candida glabrata (strain ATCC 2001 / BCRC 20586 / JCM 3761 / NBRC 0622 / NRRL Y-65 / CBS 138) (Yeast).